Consider the following 338-residue polypeptide: Ferredoxin--NADP reductase (338 aa).

FAD contacts are provided by D32, Q40, Y45, V85, F120, D287, and T327.

It belongs to the ferredoxin--NADP reductase type 2 family. In terms of assembly, homodimer. FAD is required as a cofactor.

It catalyses the reaction 2 reduced [2Fe-2S]-[ferredoxin] + NADP(+) + H(+) = 2 oxidized [2Fe-2S]-[ferredoxin] + NADPH. The sequence is that of Ferredoxin--NADP reductase from Wolbachia pipientis wMel.